Here is a 149-residue protein sequence, read N- to C-terminus: uncharacterized protein (149 aa).

This is an uncharacterized protein from Saccharomyces cerevisiae (strain ATCC 204508 / S288c) (Baker's yeast).